Here is a 109-residue protein sequence, read N- to C-terminus: Large ribosomal subunit protein uL23 (109 aa).

It belongs to the universal ribosomal protein uL23 family. In terms of assembly, part of the 50S ribosomal subunit. Contacts protein L29, and trigger factor when it is bound to the ribosome.

Its function is as follows. One of the early assembly proteins it binds 23S rRNA. One of the proteins that surrounds the polypeptide exit tunnel on the outside of the ribosome. Forms the main docking site for trigger factor binding to the ribosome. The chain is Large ribosomal subunit protein uL23 from Aquifex pyrophilus.